The primary structure comprises 239 residues: tRNA (guanine-N(1)-)-methyltransferase (239 aa).

Residues Gly-112 and 132–137 each bind S-adenosyl-L-methionine; that span reads IGDYVL.

It belongs to the RNA methyltransferase TrmD family. Homodimer.

The protein localises to the cytoplasm. It catalyses the reaction guanosine(37) in tRNA + S-adenosyl-L-methionine = N(1)-methylguanosine(37) in tRNA + S-adenosyl-L-homocysteine + H(+). Specifically methylates guanosine-37 in various tRNAs. The chain is tRNA (guanine-N(1)-)-methyltransferase from Rhodospirillum rubrum (strain ATCC 11170 / ATH 1.1.1 / DSM 467 / LMG 4362 / NCIMB 8255 / S1).